We begin with the raw amino-acid sequence, 292 residues long: 2-(5''-triphosphoribosyl)-3'-dephosphocoenzyme-A synthase (292 aa).

This sequence belongs to the CitG/MdcB family.

It carries out the reaction 3'-dephospho-CoA + ATP = 2'-(5''-triphospho-alpha-D-ribosyl)-3'-dephospho-CoA + adenine. Its function is as follows. Catalyzes the formation of 2-(5''-triphosphoribosyl)-3'-dephosphocoenzyme-A, the precursor of the prosthetic group of the holo-acyl carrier protein (gamma chain) of citrate lyase, from ATP and dephospho-CoA. The sequence is that of 2-(5''-triphosphoribosyl)-3'-dephosphocoenzyme-A synthase from Escherichia coli (strain ATCC 8739 / DSM 1576 / NBRC 3972 / NCIMB 8545 / WDCM 00012 / Crooks).